Consider the following 688-residue polypeptide: Glycine--tRNA ligase beta subunit (688 aa).

This sequence belongs to the class-II aminoacyl-tRNA synthetase family. Tetramer of two alpha and two beta subunits.

The protein localises to the cytoplasm. It catalyses the reaction tRNA(Gly) + glycine + ATP = glycyl-tRNA(Gly) + AMP + diphosphate. This Aliivibrio salmonicida (strain LFI1238) (Vibrio salmonicida (strain LFI1238)) protein is Glycine--tRNA ligase beta subunit.